Here is a 318-residue protein sequence, read N- to C-terminus: Retinol dehydrogenase 5 (318 aa).

A helical transmembrane segment spans residues 1–23 (MWLPLLLGALLWAVLWLLRDRQS). Residues 24–288 (LPASDAFIFI…TRYSPGWDAK (265 aa)) lie on the Lumenal side of the membrane. Residue 32–56 (FITGCDSGFGRLLALQLDQKGFQVL) coordinates NADP(+). Position 163 (serine 163) interacts with substrate. Tyrosine 175 (proton acceptor) is an active-site residue. A helical transmembrane segment spans residues 289-309 (LLWLPASYLPARVVDAVLTWI). At 310–318 (LPRPAQSVS) the chain is on the cytoplasmic side.

The protein belongs to the short-chain dehydrogenases/reductases (SDR) family. As to quaternary structure, homodimer. As to expression, expressed in eye, liver, kidney, brain, intestine, placenta, epididymus and submaxillary gland. In eye, strongly expressed in the retinal pigment epithelium, with lower expression levels detected in the inner segment of the photoreceptor cells and in the outer plexiform layer. In kidney, strong expression detected in the distal tubules and the transitional epithelium in the renal pelvis, with weaker expression detected in the epithelium of the outer stripe of the outer zone of the medulla. In liver, detected in hepatocytes in the centrilobular area. In lung, present in club cells in the epithelium of the bronchiole, in parenchyma and in cartilage surrounding the secondary bronchi. In skin, expressed in epidermis, hair follicles and mast cells in the dermis. Expressed in heart. Not detected in heart. Not detected in lung, spleen, skeletal muscle and testis.

The protein localises to the endoplasmic reticulum membrane. It catalyses the reaction 11-cis-retinol + NAD(+) = 11-cis-retinal + NADH + H(+). The catalysed reaction is 9-cis-retinol + NAD(+) = 9-cis-retinal + NADH + H(+). It carries out the reaction 13-cis-retinol + NAD(+) = 13-cis-retinal + NADH + H(+). The enzyme catalyses androsterone + NAD(+) = 5alpha-androstan-3,17-dione + NADH + H(+). It catalyses the reaction 5alpha-androstane-3alpha,17beta-diol + NAD(+) = 17beta-hydroxy-5alpha-androstan-3-one + NADH + H(+). Its pathway is cofactor metabolism; retinol metabolism. Inhibited by 9-cis-, 13-cis- and all-trans-retinoic acids, with the most potent inhibitor being 13-cis-retinoic acid. Weakly inhibited by oleic acid. Functionally, catalyzes the oxidation of cis-isomers of retinol, including 11-cis-, 9-cis-, and 13-cis-retinol in an NAD-dependent manner. Has no activity towards all-trans retinal. Plays a significant role in 11-cis retinol oxidation in the retinal pigment epithelium cells (RPE). Also recognizes steroids (androsterone, androstanediol) as its substrates. The polypeptide is Retinol dehydrogenase 5 (Mus musculus (Mouse)).